A 3498-amino-acid chain; its full sequence is Mediator of RNA polymerase II transcription subunit 12 (3498 aa).

6 disordered regions span residues 365-456 (IKQH…HTDI), 497-764 (GGVG…EPEK), 2209-2576 (AKKR…AYMK), 2589-2620 (ENNR…EAYA), 2637-2889 (LRKE…KEKQ), and 2917-3498 (NVAG…PNQY). Residues 368 to 394 (HEKRKAGSLKKSERRRRRGLSKNRPKK) are compositionally biased toward basic residues. The span at 404–416 (SLDHDKVQIKQEP) shows a compositional bias: basic and acidic residues. Polar residues-rich tracts occupy residues 424–440 (GQQS…SHQY) and 512–536 (SNPT…SASP). Positions 539–570 (SVDKENECEKKEDESKTKEKNKDKEKDKEKEK) form a coiled coil. 2 stretches are compositionally biased toward basic and acidic residues: residues 540–578 (VDKE…HTND) and 593–614 (ANDK…TGKE). Positions 621 to 630 (SKTAKTSTSA) are enriched in low complexity. Basic and acidic residues-rich tracts occupy residues 691 to 719 (EVDK…KKAD), 738 to 764 (ESEK…EPEK), and 2209 to 2285 (AKKR…KRAS). The segment at 2142 to 3498 (QTTRLDKVAK…YPNQQPPNQY (1357 aa)) is required for nuclear localization. A coiled-coil region spans residues 2203-2290 (VIDEEEAKKR…EKRASDAAAA (88 aa)). Composition is skewed to low complexity over residues 2342 to 2360 (RADT…APIA) and 2409 to 2431 (LADA…SSMP). The stretch at 2395 to 2420 (RNLLNRKKEEKRNSLADASAAAAAAN) forms a coiled coil. Polar residues predominate over residues 2444-2456 (QSAGATQQLQGMQ). Over residues 2459-2479 (QMGGSMSGMNQNMGGMNQSMS) the composition is skewed to low complexity. The span at 2514–2530 (NRSSGPVSSETRQQIME) shows a compositional bias: polar residues. Basic and acidic residues-rich tracts occupy residues 2547 to 2576 (QKQR…AYMK), 2589 to 2616 (ENNR…RAAE), and 2637 to 2724 (LRKE…EQQR). The segment covering 2725–2770 (RSQQNPYMNQQGQYSQQPPPSYQQSSYPNNYQPGQQGNQPPNYQQP) has biased composition (low complexity). Positions 2771–2783 (SHQSMQQGHQAGY) are enriched in polar residues. A compositionally biased stretch (low complexity) spans 2784–2810 (QQTSNQMQMNMQQQQNRQQGGPQQSFS). Composition is skewed to polar residues over residues 2816-2827 (NQPSQPGYSGYN), 2842-2852 (RNPFGNQQDMQ), 2868-2881 (HAQQ…QLSL), and 2926-2956 (GQQQ…SSNP). Positions 2957–2993 (QGGMQSYQQQQPVLGQPGPIQTGQSTQQQIPAQSQQQ) are enriched in low complexity. The segment covering 2994 to 3009 (YNSGRPQMHTTPTKND) has biased composition (polar residues). Residues 3039-3100 (GQNVPGGYQQ…NVSQSQSAAQ (62 aa)) are compositionally biased toward low complexity. Residues 3103–3127 (RPSQDSAYQQSGYNQTGNQSYQRPD) are compositionally biased toward polar residues. Composition is skewed to low complexity over residues 3128–3184 (QQQQ…SAQY) and 3192–3223 (QGYD…QTQQ). Positions 3231–3253 (SGYTANSGGSSNILNQSMEESGL) are enriched in polar residues. Residues 3254 to 3311 (NQGFSGASSNASSQQGGSSQMQQSGYGMPGNQMQMQQNQKQQVQRGMPTGMGQTNMGQ) show a composition bias toward low complexity. Over residues 3312-3321 (SGMGQSGMGQ) the composition is skewed to gly residues. 2 stretches are compositionally biased toward low complexity: residues 3336–3356 (QGQQ…NQRG) and 3370–3408 (QQQH…QGQQ). The segment covering 3414–3425 (PSQQQSGAAYSN) has biased composition (polar residues). Low complexity predominate over residues 3426-3436 (QMQFQGVRQGQ). Residues 3437–3446 (QGMGGMGGSG) are compositionally biased toward gly residues. The span at 3447 to 3498 (QQQPQTQPHGSNQYYQQQQDQRMQQQPQQPGQQQQHGYGMGQYPNQQPPNQY) shows a compositional bias: low complexity.

Belongs to the Mediator complex subunit 12 family. In terms of assembly, component of the Mediator complex. In terms of tissue distribution, ubiquitously expressed.

The protein localises to the nucleus. In terms of biological role, component of the Mediator complex, a coactivator involved in regulated gene transcription of nearly all RNA polymerase II-dependent genes. Mediator functions as a bridge to convey information from gene-specific regulatory proteins to the basal RNA polymerase II transcription machinery. Mediator is recruited to promoters by direct interactions with regulatory proteins and serves as a scaffold for the assembly of a functional preinitiation complex with RNA polymerase II and the general transcription factors. Functions downstream of let-60 during vulval induction. Required for asymmetric division of T-cells and for hypodermal development. The polypeptide is Mediator of RNA polymerase II transcription subunit 12 (dpy-22) (Caenorhabditis elegans).